The sequence spans 380 residues: MMENQEFLSLDEAVLLSNKFNLNFSKEDILYLSSLDHFKAYNNIQYVYMGDVQKPVYKIHGLKGFFKTRLETKSRLLLQELDIIRTNDSYVIDKKKEQGFSRDIWTIKERNNLKSVLYLHLSNRYDDLYFIDYGFASVTLPIYEERVKKHDIVKGMVESTMLSNIAIRNKPQNAKLFVSFLSKSLTNHYVPNSSFDIFEFNIAGIIDYPFSLEPYILSYKEKEDDDLLELYNEYNFDEIFYFKHTDLLEYFQKIIDKEEKIQKSYQYQTELITELQGRIAELEKENQSLKENVKEPETSKPIRPDEKETLLKLIYALAMGRTDKDFSASAYFNKKGVLKVSTMINEIVADLEQVGIMNFSDGTLRKRLSEILQMGELKAD.

The stretch at 256–301 (DKEEKIQKSYQYQTELITELQGRIAELEKENQSLKENVKEPETSKP) forms a coiled coil.

This is an uncharacterized protein from Pasteurella multocida (strain Pm70).